A 263-amino-acid chain; its full sequence is Kallikrein 1-related peptidase b27 (263 aa).

Residues 1–17 (MRFLILFLALSLGGIDA) form the signal peptide. Positions 18–24 (APPVQSR) are cleaved as a propeptide — activation peptide. The Peptidase S1 domain occupies 25–260 (IIGGFKCKKN…FTSWIKDTMA (236 aa)). 5 disulfides stabilise this stretch: C31/C175, C50/C66, C154/C221, C186/C200, and C211/C236. H65 acts as the Charge relay system in catalysis. 2 N-linked (GlcNAc...) asparagine glycosylation sites follow: N69 and N105. Residue D122 is the Charge relay system of the active site. S215 acts as the Charge relay system in catalysis.

This sequence belongs to the peptidase S1 family. Kallikrein subfamily. In terms of tissue distribution, expressed in testis and submaxillary gland. Not expressed in heart, brain, spleen, lung, liver, muscle, kidney and ovary. In the testis, expression localized specifically to Leydig cells in the interstitial tissues.

With respect to regulation, strongly inhibited by protease inhibitors diisopropyl fluorophosphate, phenylmethanesulfonyl fluoride and SBTI. Serine protease with chymotrypsin-like cleavage specificity. Shows activity towards casein, gelatin, IGFBP3 and fibronectin but not towards laminin or collagens I and IV. Does not hydrolyze kininogin to release Lys-bradykinin. This is Kallikrein 1-related peptidase b27 (Klk1b27) from Mus musculus (Mouse).